A 226-amino-acid polypeptide reads, in one-letter code: Urease accessory protein UreE (226 aa).

A disordered region spans residues 192-226 (PHGSGLHIHSIHSHGDGHSHDHDHSHGDHDSDHKH). The segment covering 204–226 (SHGDGHSHDHDHSHGDHDSDHKH) has biased composition (basic and acidic residues).

This sequence belongs to the UreE family.

The protein resides in the cytoplasm. Functionally, involved in urease metallocenter assembly. Binds nickel. Probably functions as a nickel donor during metallocenter assembly. The protein is Urease accessory protein UreE of Yersinia intermedia.